The sequence spans 458 residues: UPF0210 protein MmarC5_0151 (458 aa).

The protein belongs to the UPF0210 family.

The polypeptide is UPF0210 protein MmarC5_0151 (Methanococcus maripaludis (strain C5 / ATCC BAA-1333)).